The sequence spans 294 residues: UPF0761 membrane protein MADE_1017605/MADE_1018330 (294 aa).

A run of 6 helical transmembrane segments spans residues 45 to 65, 99 to 119, 141 to 161, 182 to 202, 213 to 233, and 247 to 267; these read LLSL…FPAF, ASQM…MLIS, FAIY…SVVV, FLLS…LYMV, AFVG…GFAL, and ALAV…IVLF.

It belongs to the UPF0761 family.

The protein resides in the cell inner membrane. In Alteromonas mediterranea (strain DSM 17117 / CIP 110805 / LMG 28347 / Deep ecotype), this protein is UPF0761 membrane protein MADE_1017605/MADE_1018330.